The primary structure comprises 134 residues: D-ribose pyranase (134 aa).

H20 (proton donor) is an active-site residue. Residues D28, H99, and 123–125 (YSN) each bind substrate.

Belongs to the RbsD / FucU family. RbsD subfamily. As to quaternary structure, homodecamer.

The protein resides in the cytoplasm. The catalysed reaction is beta-D-ribopyranose = beta-D-ribofuranose. The protein operates within carbohydrate metabolism; D-ribose degradation; D-ribose 5-phosphate from beta-D-ribopyranose: step 1/2. Functionally, catalyzes the interconversion of beta-pyran and beta-furan forms of D-ribose. The polypeptide is D-ribose pyranase (Staphylococcus aureus (strain USA300)).